We begin with the raw amino-acid sequence, 511 residues long: ATP synthase subunit alpha (511 aa).

169–176 (GDRQTGKT) serves as a coordination point for ATP.

Belongs to the ATPase alpha/beta chains family. As to quaternary structure, F-type ATPases have 2 components, CF(1) - the catalytic core - and CF(0) - the membrane proton channel. CF(1) has five subunits: alpha(3), beta(3), gamma(1), delta(1), epsilon(1). CF(0) has three main subunits: a(1), b(2) and c(9-12). The alpha and beta chains form an alternating ring which encloses part of the gamma chain. CF(1) is attached to CF(0) by a central stalk formed by the gamma and epsilon chains, while a peripheral stalk is formed by the delta and b chains.

Its subcellular location is the cell inner membrane. It carries out the reaction ATP + H2O + 4 H(+)(in) = ADP + phosphate + 5 H(+)(out). Its function is as follows. Produces ATP from ADP in the presence of a proton gradient across the membrane. The alpha chain is a regulatory subunit. In Paracoccus denitrificans (strain Pd 1222), this protein is ATP synthase subunit alpha.